We begin with the raw amino-acid sequence, 533 residues long: Calcium-dependent protein kinase 19 (533 aa).

2 stretches are compositionally biased toward polar residues: residues 1 to 12 (MGSCCSRATSPD) and 24 to 38 (SHQT…SYNH). Positions 1–53 (MGSCCSRATSPDSGRGGANGYGYSHQTKPAQTTPSYNHPQPPPPAEVRYTPSA) are disordered. Glycine 2 carries the N-myristoyl glycine lipid modification. Residues 85 to 343 (YSLGKELGRG…SAQVLQHPWL (259 aa)) form the Protein kinase domain. Residues 91–99 (LGRGQFGVT) and lysine 114 each bind ATP. Aspartate 209 serves as the catalytic Proton acceptor. An autoinhibitory domain region spans residues 348–378 (ASDKPIDSAVLSRMKQFRAMNKLKKMALKVI). EF-hand domains follow at residues 385 to 420 (EEIK…LGSK), 421 to 456 (LSEA…RHKL), 457 to 492 (ERDE…HEMG), and 497 to 527 (IKDI…GGMQ). Ca(2+) is bound by residues aspartate 398, aspartate 400, serine 402, threonine 404, glutamate 409, aspartate 434, aspartate 436, asparagine 438, serine 440, glutamate 445, aspartate 470, aspartate 472, serine 474, glutamate 481, aspartate 505, aspartate 507, aspartate 509, arginine 511, and glutamate 516.

It belongs to the protein kinase superfamily. Ser/Thr protein kinase family. CDPK subfamily. As to expression, expressed in root tips, leaf veins, mesophyll cells, flower reproductive organs and mature pollen grains.

It is found in the membrane. The enzyme catalyses L-seryl-[protein] + ATP = O-phospho-L-seryl-[protein] + ADP + H(+). The catalysed reaction is L-threonyl-[protein] + ATP = O-phospho-L-threonyl-[protein] + ADP + H(+). Its activity is regulated as follows. Activated by calcium. Autophosphorylation may play an important role in the regulation of the kinase activity. Its function is as follows. May play a role in signal transduction pathways that involve calcium as a second messenger. This chain is Calcium-dependent protein kinase 19, found in Oryza sativa subsp. japonica (Rice).